The primary structure comprises 51 residues: Photosystem I reaction center subunit IX (51 aa).

Residues 17–37 (FFSTAPVIALVFFTLTAGFLV) traverse the membrane as a helical segment.

Belongs to the PsaJ family.

It localises to the cellular thylakoid membrane. In terms of biological role, may help in the organization of the PsaE and PsaF subunits. The protein is Photosystem I reaction center subunit IX of Acaryochloris marina (strain MBIC 11017).